The following is a 417-amino-acid chain: Pygopus homolog 1 (417 aa).

Positions 1–11 (MSAEQDKEPIA) are enriched in basic and acidic residues. Disordered stretches follow at residues 1–71 (MSAE…AANP), 175–265 (HFRQ…MEDP), and 284–318 (ENSR…CTPD). Residues 18–27 (GDSGLDGLGG) are compositionally biased toward gly residues. A Nuclear localization signal motif is present at residues 35–41 (PDKKKRK). 3 stretches are compositionally biased toward polar residues: residues 180 to 221 (SAEN…TNHS), 240 to 256 (DFTQ…SSTH), and 284 to 305 (ENSR…QNKP). Residues 338–396 (VYPCGICTNEVNDDQDAILCEASCQKWFHRICTGMTETAYGLLTAEASAVWGCDTCMAD) form a PHD-type zinc finger. The tract at residues 339–386 (YPCGICTNEVNDDQDAILCEASCQKWFHRICTGMTETAYGLLTAEASA) is interaction with H3K4me2. The tract at residues 371-389 (GMTETAYGLLTAEASAVWG) is interaction with BCL9.

Interacts with BCL9 via The PHD-type zinc finger motiv, and thereby becomes part of the nuclear beta-catenin/TCF complex. Found in a complex with BCL9L, CDC73, CTNNB1 and PYGO1. Interacts with histone H3 mono-, di- or tri-methylated at 'Lys4' (H3K4me1, H3K4me2, H3K4me3); the interaction is enhanced by the interaction with BCL9.

The protein resides in the nucleus. Its function is as follows. Involved in signal transduction through the Wnt pathway. The sequence is that of Pygopus homolog 1 (Pygo1) from Mus musculus (Mouse).